The sequence spans 354 residues: Uroporphyrinogen decarboxylase (354 aa).

Residues 27–31, Asp-77, Tyr-154, Thr-209, and His-327 each bind substrate; that span reads RQAGR.

This sequence belongs to the uroporphyrinogen decarboxylase family. Homodimer.

Its subcellular location is the cytoplasm. The enzyme catalyses uroporphyrinogen III + 4 H(+) = coproporphyrinogen III + 4 CO2. It participates in porphyrin-containing compound metabolism; protoporphyrin-IX biosynthesis; coproporphyrinogen-III from 5-aminolevulinate: step 4/4. Functionally, catalyzes the decarboxylation of four acetate groups of uroporphyrinogen-III to yield coproporphyrinogen-III. The chain is Uroporphyrinogen decarboxylase from Serratia proteamaculans (strain 568).